A 737-amino-acid chain; its full sequence is Exostosin-1c (737 aa).

The Cytoplasmic segment spans residues 1–6 (MQARKK). Residues 7–27 (YVLLGLCTCCWILLYYWAGLQ) form a helical; Signal-anchor for type II membrane protein membrane-spanning segment. Residues 28–737 (ERLLGLITHR…RKRYKDLERV (710 aa)) are Lumenal-facing. N194 and N322 each carry an N-linked (GlcNAc...) asparagine glycan. The UDP-N-acetyl-alpha-D-glucosamine site is built by R432, R540, D556, E557, D558, E644, D645, and R692. Position 558 (D558) interacts with Mn(2+). A disulfide bond links C643 and C695. The active site involves D645.

The protein belongs to the glycosyltransferase 47 family. Requires Mn(2+) as cofactor.

It is found in the endoplasmic reticulum membrane. The enzyme catalyses 3-O-{[(1-&gt;4)-beta-D-GlcA-(1-&gt;4)-alpha-D-GlcNAc](n)-(1-&gt;4)-beta-D-GlcA-(1-&gt;3)-beta-D-Gal-(1-&gt;3)-beta-D-Gal-(1-&gt;4)-beta-D-Xyl}-L-seryl-[protein] + UDP-N-acetyl-alpha-D-glucosamine = 3-O-{alpha-D-GlcNAc-[(1-&gt;4)-beta-D-GlcA-(1-&gt;4)-alpha-D-GlcNAc](n)-(1-&gt;4)-beta-D-GlcA-(1-&gt;3)-beta-D-Gal-(1-&gt;3)-beta-D-Gal-(1-&gt;4)-beta-D-Xyl}-L-seryl-[protein] + UDP + H(+). It carries out the reaction 3-O-{alpha-D-GlcNAc-[(1-&gt;4)-beta-D-GlcA-(1-&gt;4)-alpha-D-GlcNAc](n)-(1-&gt;4)-beta-D-GlcA-(1-&gt;3)-beta-D-Gal-(1-&gt;3)-beta-D-Gal-(1-&gt;4)-beta-D-Xyl}-L-seryl-[protein] + UDP-alpha-D-glucuronate = 3-O-{[(1-&gt;4)-beta-D-GlcA-(1-&gt;4)-alpha-D-GlcNAc](n+1)-(1-&gt;4)-beta-D-GlcA-(1-&gt;3)-beta-D-Gal-(1-&gt;3)-beta-D-Gal-(1-&gt;4)-beta-D-Xyl}-L-seryl-[protein] + UDP + H(+). Its pathway is protein modification; protein glycosylation. In terms of biological role, glycosyltransferase required for the biosynthesis of heparan-sulfate. The polypeptide is Exostosin-1c (ext1c) (Danio rerio (Zebrafish)).